The sequence spans 163 residues: Large ribosomal subunit protein uL18 (163 aa).

The protein belongs to the universal ribosomal protein uL18 family. Part of the 50S ribosomal subunit. Contacts the 5S and 23S rRNAs.

This is one of the proteins that bind and probably mediate the attachment of the 5S RNA into the large ribosomal subunit, where it forms part of the central protuberance. This Thermoplasma acidophilum (strain ATCC 25905 / DSM 1728 / JCM 9062 / NBRC 15155 / AMRC-C165) protein is Large ribosomal subunit protein uL18.